Consider the following 510-residue polypeptide: 2,3-bisphosphoglycerate-independent phosphoglycerate mutase (510 aa).

2 residues coordinate Mn(2+): aspartate 12 and serine 62. Residue serine 62 is the Phosphoserine intermediate of the active site. Substrate contacts are provided by residues histidine 123, 153 to 154 (RD), arginine 185, arginine 191, 260 to 263 (RPDR), and lysine 335. Positions 402, 406, 443, 444, and 461 each coordinate Mn(2+).

It belongs to the BPG-independent phosphoglycerate mutase family. In terms of assembly, monomer. Mn(2+) is required as a cofactor.

The enzyme catalyses (2R)-2-phosphoglycerate = (2R)-3-phosphoglycerate. The protein operates within carbohydrate degradation; glycolysis; pyruvate from D-glyceraldehyde 3-phosphate: step 3/5. In terms of biological role, catalyzes the interconversion of 2-phosphoglycerate and 3-phosphoglycerate. This Listeria monocytogenes serotype 4b (strain F2365) protein is 2,3-bisphosphoglycerate-independent phosphoglycerate mutase.